The primary structure comprises 304 residues: Porphobilinogen deaminase (304 aa).

At C240 the chain carries S-(dipyrrolylmethanemethyl)cysteine.

Belongs to the HMBS family. As to quaternary structure, monomer. Requires dipyrromethane as cofactor.

The catalysed reaction is 4 porphobilinogen + H2O = hydroxymethylbilane + 4 NH4(+). Its pathway is porphyrin-containing compound metabolism; protoporphyrin-IX biosynthesis; coproporphyrinogen-III from 5-aminolevulinate: step 2/4. Tetrapolymerization of the monopyrrole PBG into the hydroxymethylbilane pre-uroporphyrinogen in several discrete steps. The chain is Porphobilinogen deaminase from Xanthomonas oryzae pv. oryzae (strain MAFF 311018).